Reading from the N-terminus, the 417-residue chain is uncharacterized protein (417 aa).

4 consecutive transmembrane segments (helical) span residues 87-107, 130-150, 177-197, and 202-222; these read LVVA…GYWI, IAGT…TPSV, FFIT…VYAA, and IIDT…LWPD. Residues 366-398 are compositionally biased toward low complexity; that stretch reads APSAPAAAEHKATSSSNSSNSSPGSSNPTTAPT. The tract at residues 366-417 is disordered; the sequence is APSAPAAAEHKATSSSNSSNSSPGSSNPTTAPTDKFRTGSPKTQPEKISAFW.

Belongs to the YccS/YhfK family.

It localises to the cell membrane. This is an uncharacterized protein from Neisseria gonorrhoeae.